A 549-amino-acid polypeptide reads, in one-letter code: Undecaprenyl phosphate-alpha-4-amino-4-deoxy-L-arabinose arabinosyl transferase (549 aa).

Transmembrane regions (helical) follow at residues 9-29 (LLLIAFGLFYLVPLSNHGLWI), 80-100 (LFGVRIASVVATALSVLLAYL), 112-132 (SLACALLYASFGLIAGQSGYA), 136-156 (PQFTFWVNLSLVALWYALDAG), 166-186 (ILLGLACGMGFLTKGFLAWLL), 204-224 (LLGYGALAVLAALLVCLPWAL), 256-276 (PWWFYLPLLVVACLPWSGLLP), 288-308 (QAPVVFLALWLLLPLAFFSLS), 312-332 (LPTYIMPCLLPLALLMGHALV), 346-366 (NGLLNLGLALLALAALAYLQL), 376-396 (FELFLVLLVIGAWAAAGLAQW), and 402-422 (AWAAPLLASWVLIALLPAAMP).

It belongs to the glycosyltransferase 83 family.

Its subcellular location is the cell inner membrane. The catalysed reaction is 4-amino-4-deoxy-alpha-L-arabinopyranosyl di-trans,octa-cis-undecaprenyl phosphate + lipid IVA = lipid IIA + di-trans,octa-cis-undecaprenyl phosphate.. It participates in lipopolysaccharide metabolism; 4-amino-4-deoxy-beta-L-arabinose-lipid A biosynthesis. Its function is as follows. Catalyzes the transfer of the L-Ara4N moiety of the glycolipid undecaprenyl phosphate-alpha-L-Ara4N to lipid A. The modified arabinose is attached to lipid A and is required for resistance to polymyxin and cationic antimicrobial peptides. The chain is Undecaprenyl phosphate-alpha-4-amino-4-deoxy-L-arabinose arabinosyl transferase from Pseudomonas aeruginosa (strain UCBPP-PA14).